A 276-amino-acid chain; its full sequence is Undecaprenyl-diphosphatase 2 (276 aa).

8 helical membrane passes run 4 to 24 (IEALLFAVIQGVSELFPVSSL), 44 to 64 (DFLPFMVMLHLGTAAALLIYF), 87 to 107 (ARLMWLVIAGTLPAGLLGLLL), 114 to 134 (LFASTTAVLVFLALNGLLLLW), 150 to 170 (LSFAGAIKIGAGQALALLPGF), 193 to 213 (FSFLLATPIITAAGLLEIPKL), 225 to 245 (LLLACGAVSGLCAYASTWFLM), and 256 to 276 (LRPFGFYCLLVGVVGLLFKLV).

It belongs to the UppP family.

It localises to the cell inner membrane. It carries out the reaction di-trans,octa-cis-undecaprenyl diphosphate + H2O = di-trans,octa-cis-undecaprenyl phosphate + phosphate + H(+). In terms of biological role, catalyzes the dephosphorylation of undecaprenyl diphosphate (UPP). Confers resistance to bacitracin. This chain is Undecaprenyl-diphosphatase 2, found in Chromobacterium violaceum (strain ATCC 12472 / DSM 30191 / JCM 1249 / CCUG 213 / NBRC 12614 / NCIMB 9131 / NCTC 9757 / MK).